A 30-amino-acid chain; its full sequence is NADH-ubiquinone oxidoreductase chain 5 (30 aa).

A helical membrane pass occupies residues asparagine 7–phenylalanine 27.

This sequence belongs to the complex I subunit 5 family.

The protein resides in the mitochondrion inner membrane. The enzyme catalyses a ubiquinone + NADH + 5 H(+)(in) = a ubiquinol + NAD(+) + 4 H(+)(out). In terms of biological role, core subunit of the mitochondrial membrane respiratory chain NADH dehydrogenase (Complex I) that is believed to belong to the minimal assembly required for catalysis. Complex I functions in the transfer of electrons from NADH to the respiratory chain. The immediate electron acceptor for the enzyme is believed to be ubiquinone. This is NADH-ubiquinone oxidoreductase chain 5 (ND5) from Pisaster ochraceus (Ochre sea star).